A 300-amino-acid chain; its full sequence is Tyrosine recombinase XerC (300 aa).

In terms of domain architecture, Core-binding (CB) spans 1-86 (MESVLDAFDQ…AVKTFTAWAV (86 aa)). Positions 107–294 (TLPAVLRQDQ…TVARLRAVHD (188 aa)) constitute a Tyr recombinase domain. Catalysis depends on residues R151, K175, H246, R249, and H272. Residue Y281 is the O-(3'-phospho-DNA)-tyrosine intermediate of the active site.

It belongs to the 'phage' integrase family. XerC subfamily. Forms a cyclic heterotetrameric complex composed of two molecules of XerC and two molecules of XerD.

The protein localises to the cytoplasm. Functionally, site-specific tyrosine recombinase, which acts by catalyzing the cutting and rejoining of the recombining DNA molecules. The XerC-XerD complex is essential to convert dimers of the bacterial chromosome into monomers to permit their segregation at cell division. It also contributes to the segregational stability of plasmids. The chain is Tyrosine recombinase XerC from Mycobacterium sp. (strain KMS).